We begin with the raw amino-acid sequence, 333 residues long: Beta-ketoacyl-[acyl-carrier-protein] synthase III (333 aa).

Residues cysteine 112 and histidine 255 contribute to the active site. The tract at residues 256–260 (QANQR) is ACP-binding. The active site involves asparagine 285.

This sequence belongs to the thiolase-like superfamily. FabH family. As to quaternary structure, homodimer.

It localises to the cytoplasm. The catalysed reaction is malonyl-[ACP] + acetyl-CoA + H(+) = 3-oxobutanoyl-[ACP] + CO2 + CoA. It functions in the pathway lipid metabolism; fatty acid biosynthesis. Functionally, catalyzes the condensation reaction of fatty acid synthesis by the addition to an acyl acceptor of two carbons from malonyl-ACP. Catalyzes the first condensation reaction which initiates fatty acid synthesis and may therefore play a role in governing the total rate of fatty acid production. Possesses both acetoacetyl-ACP synthase and acetyl transacylase activities. Its substrate specificity determines the biosynthesis of branched-chain and/or straight-chain of fatty acids. In Synechococcus sp. (strain RCC307), this protein is Beta-ketoacyl-[acyl-carrier-protein] synthase III.